Here is a 132-residue protein sequence, read N- to C-terminus: Large-conductance mechanosensitive channel (132 aa).

Transmembrane regions (helical) follow at residues 10–30 (FAVK…SAFG) and 76–96 (GNFI…FLAI).

The protein belongs to the MscL family. As to quaternary structure, homopentamer.

The protein resides in the cell inner membrane. In terms of biological role, channel that opens in response to stretch forces in the membrane lipid bilayer. May participate in the regulation of osmotic pressure changes within the cell. The sequence is that of Large-conductance mechanosensitive channel from Campylobacter hominis (strain ATCC BAA-381 / DSM 21671 / CCUG 45161 / LMG 19568 / NCTC 13146 / CH001A).